Reading from the N-terminus, the 141-residue chain is Hemoglobin subunit alpha-D (141 aa).

A Globin domain is found at 1–141 (MLNAEDKKLI…VSAVLAEKYR (141 aa)). Residues His-58 and His-87 each contribute to the heme b site.

The protein belongs to the globin family. As to quaternary structure, heterotetramer of two alpha-D chains and two beta chains. Red blood cells.

In terms of biological role, involved in oxygen transport from the lung to the various peripheral tissues. This chain is Hemoglobin subunit alpha-D (HBAD), found in Phasianus colchicus colchicus (Black-necked pheasant).